A 183-amino-acid chain; its full sequence is NADH-quinone oxidoreductase subunit A (183 aa).

Transmembrane regions (helical) follow at residues Ile11–Leu31, Phe63–Trp83, and Val98–Leu118. The interval Thr159–Glu183 is disordered.

Belongs to the complex I subunit 3 family. As to quaternary structure, NDH-1 is composed of 14 different subunits. Subunits NuoA, H, J, K, L, M, N constitute the membrane sector of the complex.

It is found in the cell inner membrane. It catalyses the reaction a quinone + NADH + 5 H(+)(in) = a quinol + NAD(+) + 4 H(+)(out). In terms of biological role, NDH-1 shuttles electrons from NADH, via FMN and iron-sulfur (Fe-S) centers, to quinones in the respiratory chain. The immediate electron acceptor for the enzyme in this species is believed to be ubiquinone. Couples the redox reaction to proton translocation (for every two electrons transferred, four hydrogen ions are translocated across the cytoplasmic membrane), and thus conserves the redox energy in a proton gradient. The polypeptide is NADH-quinone oxidoreductase subunit A (Acinetobacter baumannii (strain ACICU)).